The sequence spans 296 residues: 4-hydroxy-tetrahydrodipicolinate synthase (296 aa).

Thr49 contacts pyruvate. Tyr137 acts as the Proton donor/acceptor in catalysis. Lys165 acts as the Schiff-base intermediate with substrate in catalysis. Pyruvate is bound at residue Ile208.

It belongs to the DapA family. Homotetramer; dimer of dimers.

The protein localises to the cytoplasm. The enzyme catalyses L-aspartate 4-semialdehyde + pyruvate = (2S,4S)-4-hydroxy-2,3,4,5-tetrahydrodipicolinate + H2O + H(+). The protein operates within amino-acid biosynthesis; L-lysine biosynthesis via DAP pathway; (S)-tetrahydrodipicolinate from L-aspartate: step 3/4. In terms of biological role, catalyzes the condensation of (S)-aspartate-beta-semialdehyde [(S)-ASA] and pyruvate to 4-hydroxy-tetrahydrodipicolinate (HTPA). This is 4-hydroxy-tetrahydrodipicolinate synthase from Ehrlichia canis (strain Jake).